The chain runs to 319 residues: Free fatty acid receptor 3 (319 aa).

Topologically, residues 1-15 (MDTSFFPGNHWLFFS) are extracellular. A helical membrane pass occupies residues 16-36 (VDLLVFLVGLPLNVMALVVFV). Topologically, residues 37–43 (NKLRRRP) are cytoplasmic. Residues 44 to 64 (VAVDLLLLNLTISDLLLLLFL) form a helical membrane-spanning segment. Residues 65 to 98 (PFRIVEAACGMKWILPFIFCPLSGFLFFTTIYLT) are Extracellular-facing. Cys84 and Cys165 are oxidised to a cystine. The helical transmembrane segment at 99-119 (SLFLMTVSIERFLSVAYPLWY) threads the bilayer. The Cytoplasmic portion of the chain corresponds to 120 to 127 (KTRPRLAQ). The chain crosses the membrane as a helical span at residues 128 to 148 (AGLVSGICWFLASAHCSVIYV). Residues 149-183 (TEYWGNATYSQGTNGTCYLEFREDQLAILLPVRLE) are Extracellular-facing. A helical transmembrane segment spans residues 184–206 (MAVVLFMVPLCITSYCYSRLVWI). Residues 207–218 (LSQGASRRRRKR) lie on the Cytoplasmic side of the membrane. Residues 219–239 (VMGLLVATLLIFFVCFGPYNM) traverse the membrane as a helical segment. The Extracellular segment spans residues 240-254 (SHVVGYVRGESPTWR). A helical transmembrane segment spans residues 255 to 275 (SYVLLLSTLNSCIDPLVFYFS). The Cytoplasmic segment spans residues 276 to 319 (SSKFQADFHQLLSRLIRACVPWTQEVSLELKVKNGEEPSKECPS).

It belongs to the G-protein coupled receptor 1 family. In terms of tissue distribution, expressed in the sympathetic nervous system.

It is found in the cell membrane. Its function is as follows. G protein-coupled receptor that is activated by a major product of dietary fiber digestion, the short chain fatty acids (SCFAs), and that plays a role in the regulation of whole-body energy homeostasis and in intestinal immunity. In omnivorous mammals, the short chain fatty acids acetate, propionate and butyrate are produced primarily by the gut microbiome that metabolizes dietary fibers. SCFAs serve as a source of energy but also act as signaling molecules. That G protein-coupled receptor is probably coupled to the pertussis toxin-sensitive, G(i/o)-alpha family of G proteins. Its activation results in the formation of inositol 1,4,5-trisphosphate, the mobilization of intracellular calcium, the phosphorylation of the MAPK3/ERK1 and MAPK1/ERK2 kinases and the inhibition of intracellular cAMP accumulation. Activated by SCFAs and by beta-hydroxybutyrate, a ketone body produced by the liver upon starvation, it inhibits N-type calcium channels and modulates the activity of sympathetic neurons through a signaling cascade involving the beta and gamma subunits of its coupled G protein, phospholipase C and MAP kinases. Thereby, it may regulate energy expenditure through the control of the sympathetic nervous system that controls for instance heart rate. Upon activation by SCFAs accumulating in the intestine, it may also signal to the brain via neural circuits which in turn would regulate intestinal gluconeogenesis. May also control the production of hormones involved in whole-body energy homeostasis. May for instance, regulate blood pressure through renin secretion. May also regulate secretion of the PYY peptide by enteroendocrine cells and control gut motility, intestinal transit rate, and the harvesting of energy from SCFAs produced by gut microbiota. May also indirectly regulate the production of LEP/Leptin, a hormone acting on the CNS to inhibit food intake, in response to the presence of short-chain fatty acids in the intestine. Finally, may also play a role in glucose homeostasis. Besides its role in energy homeostasis, may play a role in intestinal immunity. May mediate the activation of the inflammatory and immune response by SCFAs in the gut, regulating the rapid production of chemokines and cytokines by intestinal epithelial cells. The protein is Free fatty acid receptor 3 (Ffar3) of Rattus norvegicus (Rat).